A 477-amino-acid chain; its full sequence is Glycogen synthase (477 aa).

Lys15 lines the ADP-alpha-D-glucose pocket.

This sequence belongs to the glycosyltransferase 1 family. Bacterial/plant glycogen synthase subfamily.

The catalysed reaction is [(1-&gt;4)-alpha-D-glucosyl](n) + ADP-alpha-D-glucose = [(1-&gt;4)-alpha-D-glucosyl](n+1) + ADP + H(+). Its pathway is glycan biosynthesis; glycogen biosynthesis. Synthesizes alpha-1,4-glucan chains using ADP-glucose. This is Glycogen synthase from Klebsiella pneumoniae (strain 342).